Here is an 87-residue protein sequence, read N- to C-terminus: Small ribosomal subunit protein bS18B (87 aa).

This sequence belongs to the bacterial ribosomal protein bS18 family. In terms of assembly, part of the 30S ribosomal subunit. Forms a tight heterodimer with protein bS6.

Binds as a heterodimer with protein bS6 to the central domain of the 16S rRNA, where it helps stabilize the platform of the 30S subunit. The protein is Small ribosomal subunit protein bS18B of Mycobacterium marinum (strain ATCC BAA-535 / M).